Reading from the N-terminus, the 72-residue chain is Translation initiation factor IF-1 (72 aa).

Positions 1–72 (MAKEDCIEMQ…SKARIIFRAR (72 aa)) constitute an S1-like domain.

The protein belongs to the IF-1 family. In terms of assembly, component of the 30S ribosomal translation pre-initiation complex which assembles on the 30S ribosome in the order IF-2 and IF-3, IF-1 and N-formylmethionyl-tRNA(fMet); mRNA recruitment can occur at any time during PIC assembly.

The protein resides in the cytoplasm. Its function is as follows. One of the essential components for the initiation of protein synthesis. Stabilizes the binding of IF-2 and IF-3 on the 30S subunit to which N-formylmethionyl-tRNA(fMet) subsequently binds. Helps modulate mRNA selection, yielding the 30S pre-initiation complex (PIC). Upon addition of the 50S ribosomal subunit IF-1, IF-2 and IF-3 are released leaving the mature 70S translation initiation complex. In Actinobacillus pleuropneumoniae serotype 5b (strain L20), this protein is Translation initiation factor IF-1.